A 317-amino-acid polypeptide reads, in one-letter code: Melanocyte-stimulating hormone receptor (317 aa).

Residues 1-37 are Extracellular-facing; the sequence is MPVQGSQRRLLGSLNSTPTATPHLGLAANQTGARCLE. An N-linked (GlcNAc...) asparagine glycan is attached at asparagine 29. A helical transmembrane segment spans residues 38–63; sequence VSIPDGLFLSLGLVSLVENVLVVTAI. Residues 64–72 are Cytoplasmic-facing; sequence AKNRNLHSP. Residues 73–93 form a helical membrane-spanning segment; that stretch reads MYCFICCLALSDLLVSGSNML. At 94–118 the chain is on the extracellular side; the sequence is ETAVTLLLEAGALAARAAVVQQLDN. The helical transmembrane segment at 119 to 140 threads the bilayer; that stretch reads VIDVITCSSMLSSLCFLGAIAV. Residues 141 to 163 lie on the Cytoplasmic side of the membrane; that stretch reads DRYISIFYALRYHSIVTLPRARR. The chain crosses the membrane as a helical span at residues 164–183; that stretch reads AVAAIWVASVLFSMLFIAYY. Topologically, residues 184-191 are extracellular; that stretch reads DHAAVLLC. Residues 192–211 form a helical membrane-spanning segment; it reads LVVFFLAMLVLMAVLYVHML. The Cytoplasmic portion of the chain corresponds to 212–240; the sequence is ARACQHAQGIARLHKRQRPAHQGFGLKGA. A helical transmembrane segment spans residues 241–266; it reads ATLTILLGIFFLCWGPFFLHLTLIVL. At 267 to 279 the chain is on the extracellular side; sequence CPQHPTCSCIFKN. Residues 280 to 300 form a helical membrane-spanning segment; it reads FNLFLALIICNAIIDPLIYAF. At 301 to 317 the chain is on the cytoplasmic side; the sequence is RSQELRRTLKEVLLCSW. A lipid anchor (S-palmitoyl cysteine) is attached at cysteine 315.

It belongs to the G-protein coupled receptor 1 family. As to quaternary structure, interacts with MGRN1, but does not undergo MGRN1-mediated ubiquitination; this interaction competes with GNAS-binding and thus inhibits agonist-induced cAMP production. Interacts with OPN3; the interaction results in a decrease in MC1R-mediated cAMP signaling and ultimately a decrease in melanin production in melanocytes.

It localises to the cell membrane. Functionally, receptor for MSH (alpha, beta and gamma) and ACTH. The activity of this receptor is mediated by G proteins which activate adenylate cyclase. Mediates melanogenesis, the production of eumelanin (black/brown) and phaeomelanin (red/yellow), via regulation of cAMP signaling in melanocytes. This Miopithecus talapoin (Angolan talapoin) protein is Melanocyte-stimulating hormone receptor (MC1R).